The sequence spans 182 residues: Adenylate kinase (182 aa).

12–17 (GAGKGT) contacts ATP. An NMP region spans residues 32 to 61 (STGDLLRTEVGAKTPLGQEAAAVMNRGELV). Residues threonine 33, arginine 38, 59–61 (ELV), 85–88 (GFPR), and glutamine 92 contribute to the AMP site. The tract at residues 126 to 132 (SRGRSDD) is LID. Arginine 127 provides a ligand contact to ATP. Residues arginine 129 and arginine 140 each coordinate AMP. Residue glycine 168 participates in ATP binding.

This sequence belongs to the adenylate kinase family. Monomer.

The protein resides in the cytoplasm. The catalysed reaction is AMP + ATP = 2 ADP. It functions in the pathway purine metabolism; AMP biosynthesis via salvage pathway; AMP from ADP: step 1/1. Catalyzes the reversible transfer of the terminal phosphate group between ATP and AMP. Plays an important role in cellular energy homeostasis and in adenine nucleotide metabolism. The chain is Adenylate kinase from Prochlorococcus marinus (strain MIT 9313).